Reading from the N-terminus, the 158-residue chain is Secreted RxLR effector protein 2 (158 aa).

Positions 1-21 are cleaved as a signal peptide; it reads MRLLLWVLLVTLVTFLSSGDA. The short motif at 54 to 75 is the RxLR-dEER element; the sequence is RFLRGDRSNIVNLKDGDENEER.

The protein belongs to the RxLR effector family.

The protein resides in the secreted. It is found in the host cell. Its function is as follows. Secreted effector that completely suppresses elicitor-induced cell death in host and enhances virulence of P.parasitica. The chain is Secreted RxLR effector protein 2 from Phytophthora nicotianae (Potato buckeye rot agent).